A 156-amino-acid chain; its full sequence is Peroxisome assembly protein 22 (156 aa).

A helical transmembrane segment spans residues 24–46 (LSIIAVGVLSTVAVTVGYLLYLY).

It belongs to the peroxin-22 family.

It is found in the peroxisome membrane. Its function is as follows. Involved in peroxisome biogenesis. The sequence is that of Peroxisome assembly protein 22 (PEX22) from Kluyveromyces lactis (strain ATCC 8585 / CBS 2359 / DSM 70799 / NBRC 1267 / NRRL Y-1140 / WM37) (Yeast).